Consider the following 195-residue polypeptide: Dephospho-CoA kinase (195 aa).

The DPCK domain occupies 3–195; the sequence is KIGLTGGIGS…ANMKNVIAEI (193 aa). 11 to 16 is a binding site for ATP; sequence GSGKST.

Belongs to the CoaE family.

It localises to the cytoplasm. The enzyme catalyses 3'-dephospho-CoA + ATP = ADP + CoA + H(+). It functions in the pathway cofactor biosynthesis; coenzyme A biosynthesis; CoA from (R)-pantothenate: step 5/5. Functionally, catalyzes the phosphorylation of the 3'-hydroxyl group of dephosphocoenzyme A to form coenzyme A. This Corynebacterium glutamicum (Brevibacterium saccharolyticum) protein is Dephospho-CoA kinase.